The primary structure comprises 469 residues: RuvB-like helicase 2 (469 aa).

73–80 (GEPGTGKT) serves as a coordination point for ATP.

The protein belongs to the RuvB family. In terms of assembly, forms homohexameric rings. May form a dodecamer with rvb1 made of two stacked hexameric rings. Component of the chromatin remodeling Ino80 complex. Component of the RNA polymerase II holoenzyme complex.

It localises to the nucleus. It catalyses the reaction ATP + H2O = ADP + phosphate + H(+). Functionally, has double-stranded DNA-stimulated ATPase and ATP-dependent DNA helicase (5' to 3') activity suggesting a role in nuclear processes such as recombination and transcription. In terms of biological role, proposed core component of the chromatin remodeling Ino80 complex which is involved in transcriptional regulation, DNA replication and probably DNA repair. In Dictyostelium discoideum (Social amoeba), this protein is RuvB-like helicase 2 (rvb2).